Consider the following 84-residue polypeptide: Apoptosis inhibitor Rv3654c (84 aa).

An N-terminal signal peptide occupies residues 1–39; that stretch reads MVARHRAQAAADLASLAAAARLPSGLAAACARATLVARA.

In terms of assembly, interacts with human polypyrimidine tract binding protein-associated splicing factor (PSF).

The protein localises to the secreted. Its subcellular location is the host cytoplasm. Its function is as follows. Effector protein that participates in the suppression of macrophage apoptosis by blocking the extrinsic pathway. Recognizes the host polypyrimidine tract binding protein-associated splicing factor (PSF), which probably leads to its cleavage, diminishing the level of caspase-8 in macrophages. This chain is Apoptosis inhibitor Rv3654c, found in Mycobacterium tuberculosis (strain ATCC 25618 / H37Rv).